A 38-amino-acid polypeptide reads, in one-letter code: Large ribosomal subunit protein bL36 (38 aa).

This sequence belongs to the bacterial ribosomal protein bL36 family.

This Synechococcus sp. (strain JA-2-3B'a(2-13)) (Cyanobacteria bacterium Yellowstone B-Prime) protein is Large ribosomal subunit protein bL36.